A 351-amino-acid chain; its full sequence is Photosystem II D2 protein (351 aa).

Residues 39–59 (TAYLALGGWFTGTTFVTSWYT) traverse the membrane as a helical segment. His-116 provides a ligand contact to chlorophyll a. The helical transmembrane segment at 123 to 139 (GFMLRQFEIARLVGIRP) threads the bilayer. Pheophytin a-binding residues include Gln-128 and Asn-141. The helical transmembrane segment at 151–164 (VFLACFLIYPLGQH) threads the bilayer. Position 196 (His-196) interacts with chlorophyll a. The helical transmembrane segment at 206-226 (GALLCGIHGATVQNTLFEDGA) threads the bilayer. 2 residues coordinate a plastoquinone: His-213 and Phe-260. His-213 contributes to the Fe cation binding site. Residue His-267 participates in Fe cation binding. Residues 277–293 (GMWTPSVGIVGLAVNLR) form a helical membrane-spanning segment.

It belongs to the reaction center PufL/M/PsbA/D family. As to quaternary structure, PSII is composed of 1 copy each of membrane proteins PsbA, PsbB, PsbC, PsbD, PsbE, PsbF, PsbH, PsbI, PsbJ, PsbK, PsbL, PsbM, PsbT, PsbX, PsbY, Psb30/Ycf12, peripheral proteins PsbO, CyanoQ (PsbQ), PsbU, PsbV and a large number of cofactors. It forms dimeric complexes. The D1/D2 heterodimer binds P680, chlorophylls that are the primary electron donor of PSII, and subsequent electron acceptors. It shares a non-heme iron and each subunit binds pheophytin, quinone, additional chlorophylls, carotenoids and lipids. There is also a Cl(-1) ion associated with D1 and D2, which is required for oxygen evolution. The PSII complex binds additional chlorophylls, carotenoids and specific lipids. is required as a cofactor.

It is found in the cellular thylakoid membrane. It catalyses the reaction 2 a plastoquinone + 4 hnu + 2 H2O = 2 a plastoquinol + O2. Its function is as follows. Photosystem II (PSII) is a light-driven water:plastoquinone oxidoreductase that uses light energy to abstract electrons from H(2)O, generating O(2) and a proton gradient subsequently used for ATP formation. It consists of a core antenna complex that captures photons, and an electron transfer chain that converts photonic excitation into a charge separation. The D1/D2 (PsbA/PsbD) reaction center heterodimer binds P680, the primary electron donor of PSII as well as several subsequent electron acceptors. D2 is needed for assembly of a stable PSII complex. This is Photosystem II D2 protein from Prochlorococcus marinus (strain MIT 9313).